Reading from the N-terminus, the 712-residue chain is Cadherin-13 (712 aa).

A signal peptide spans 1–22; sequence MQHKTQLTLSFLLSQVLLLACA. Residues 23–138 constitute a propeptide that is removed on maturation; the sequence is EDLECTPGFQ…GNLGIPRQKR (116 aa). Residue Asn-86 is glycosylated (N-linked (GlcNAc...) asparagine). Cadherin domains follow at residues 143–245, 246–363, 364–477, 478–585, and 586–680; these read TPIL…RPMF, KEGP…PPEF, TKKE…GPVF, HPNP…VPSL, and YPTL…LQVC. N-linked (GlcNAc...) asparagine glycosylation is found at Asn-382, Asn-500, Asn-530, Asn-638, and Asn-671. A lipid anchor (GPI-anchor amidated aspartate) is attached at Asp-693. A propeptide spans 694-712 (removed in mature form); that stretch reads ALHISMTLILLSLFSLFCL.

As to quaternary structure, by contrast to classical cadherins, homodimerization in trans is not mediated by cadherin EC1 domain strand-swapping, but instead through a homophilic adhesive interface which joins two elongated EC1-EC2 domains through a region near their Ca2+-binding sites to form a tetrahedral, X-like shape. In terms of tissue distribution, neural tissues. Also found in muscles; kidney and retina.

It is found in the cell membrane. Its subcellular location is the cytoplasm. Cadherins are calcium-dependent cell adhesion proteins. They preferentially interact with themselves in a homophilic manner in connecting cells; cadherins may thus contribute to the sorting of heterogeneous cell types. May act as a negative regulator of neural cell growth. The chain is Cadherin-13 (CDH13) from Gallus gallus (Chicken).